The chain runs to 135 residues: Protein PsiE homolog (135 aa).

The next 4 membrane-spanning stretches (helical) occupy residues 20-40 (VGLLLLAAILIVFLVKETIHL), 54-74 (YLLIEGIVIYFLYFEFIALIV), 82-102 (HFPLRYFIYIGITAIIRLIIV), and 107-127 (PIDTLIYSAAILLLVVTLYLA).

Belongs to the PsiE family.

It is found in the cell inner membrane. This is Protein PsiE homolog from Serratia proteamaculans (strain 568).